The sequence spans 261 residues: MLIIPAIDIKDGKCVRLTRGDFDQQKIYLDNPRDMAIIWRKQNAKMLHVVDLDAALTGTMVNFEKIREIVATLDIPVQVGGGIRSFEDVERYLGIGVSRVVIGSAAVTNPQLIAELLATFSPSQIVVGIDAENGIPKIKGWTESSSMQDYELALEMKKLGVKRIIYTDISRDGMMQGVGYESTRRFAMKAGMRVTASGGVTSSDDLKKLQTLEQYGVDSVIVGKALYESNFPCQQLWYNYEKGMGIDCNFTTASVRGKCCF.

Aspartate 8 acts as the Proton acceptor in catalysis. The Proton donor role is filled by aspartate 130.

Belongs to the HisA/HisF family.

It localises to the cytoplasm. It catalyses the reaction 1-(5-phospho-beta-D-ribosyl)-5-[(5-phospho-beta-D-ribosylamino)methylideneamino]imidazole-4-carboxamide = 5-[(5-phospho-1-deoxy-D-ribulos-1-ylimino)methylamino]-1-(5-phospho-beta-D-ribosyl)imidazole-4-carboxamide. It participates in amino-acid biosynthesis; L-histidine biosynthesis; L-histidine from 5-phospho-alpha-D-ribose 1-diphosphate: step 4/9. In Prosthecochloris aestuarii (strain DSM 271 / SK 413), this protein is 1-(5-phosphoribosyl)-5-[(5-phosphoribosylamino)methylideneamino] imidazole-4-carboxamide isomerase.